The sequence spans 169 residues: PTS system glucose-specific EIIA component (169 aa).

The PTS EIIA type-1 domain occupies 39–143 (DVVFAEKIVG…STLTPVVISN (105 aa)). Zn(2+) contacts are provided by H76 and H91. The active-site Tele-phosphohistidine intermediate; for EIIA activity is H91. Phosphohistidine; by HPr is present on H91.

In terms of assembly, heterodimer with glycerol kinase (glpk). Requires Zn(2+) as cofactor.

The protein resides in the cytoplasm. Functionally, the phosphoenolpyruvate-dependent sugar phosphotransferase system (sugar PTS), a major carbohydrate active transport system, catalyzes the phosphorylation of incoming sugar substrates concomitantly with their translocation across the cell membrane. The enzyme II complex composed of PtsG and Crr is involved in glucose transport. This chain is PTS system glucose-specific EIIA component (crr), found in Salmonella typhi.